Reading from the N-terminus, the 31-residue chain is Cytochrome b6-f complex subunit 6 (31 aa).

Residues 4–24 traverse the membrane as a helical segment; that stretch reads ITSYFGFLLVALTITSALFIG.

This sequence belongs to the PetL family. The 4 large subunits of the cytochrome b6-f complex are cytochrome b6, subunit IV (17 kDa polypeptide, PetD), cytochrome f and the Rieske protein, while the 4 small subunits are PetG, PetL, PetM and PetN. The complex functions as a dimer.

It localises to the plastid. The protein resides in the chloroplast thylakoid membrane. Component of the cytochrome b6-f complex, which mediates electron transfer between photosystem II (PSII) and photosystem I (PSI), cyclic electron flow around PSI, and state transitions. PetL is important for photoautotrophic growth as well as for electron transfer efficiency and stability of the cytochrome b6-f complex. This chain is Cytochrome b6-f complex subunit 6, found in Panax ginseng (Korean ginseng).